Consider the following 126-residue polypeptide: Small ribosomal subunit protein uS13 (126 aa).

The interval 92-126 (HRMGLPVRGQRTRTNARTRRGRRQTVAGKKKAPGK) is disordered. Basic residues predominate over residues 101 to 126 (QRTRTNARTRRGRRQTVAGKKKAPGK).

Belongs to the universal ribosomal protein uS13 family. In terms of assembly, part of the 30S ribosomal subunit. Forms a loose heterodimer with protein S19. Forms two bridges to the 50S subunit in the 70S ribosome.

Located at the top of the head of the 30S subunit, it contacts several helices of the 16S rRNA. In the 70S ribosome it contacts the 23S rRNA (bridge B1a) and protein L5 of the 50S subunit (bridge B1b), connecting the 2 subunits; these bridges are implicated in subunit movement. Contacts the tRNAs in the A and P-sites. This Nostoc punctiforme (strain ATCC 29133 / PCC 73102) protein is Small ribosomal subunit protein uS13.